A 329-amino-acid chain; its full sequence is Serpentine receptor class alpha-3 (329 aa).

Transmembrane regions (helical) follow at residues 25 to 45 (LIYF…LKVI), 57 to 77 (ILLY…GITI), 104 to 124 (YLEM…GLLF), 144 to 164 (GIIT…IIIW), 187 to 207 (TMFF…SLLI), 238 to 258 (ICFL…GVFL), and 273 to 293 (FWVV…ILLI).

This sequence belongs to the nematode receptor-like protein sra family.

The protein resides in the membrane. This chain is Serpentine receptor class alpha-3 (sra-3), found in Caenorhabditis elegans.